The following is a 183-amino-acid chain: Endoribonuclease YbeY (183 aa).

The Zn(2+) site is built by His142, His146, and His152.

Belongs to the endoribonuclease YbeY family. Zn(2+) serves as cofactor.

The protein resides in the cytoplasm. Its function is as follows. Single strand-specific metallo-endoribonuclease involved in late-stage 70S ribosome quality control and in maturation of the 3' terminus of the 16S rRNA. This Trichodesmium erythraeum (strain IMS101) protein is Endoribonuclease YbeY.